The primary structure comprises 420 residues: Histidine--tRNA ligase (420 aa).

The protein belongs to the class-II aminoacyl-tRNA synthetase family. As to quaternary structure, homodimer.

It localises to the cytoplasm. It carries out the reaction tRNA(His) + L-histidine + ATP = L-histidyl-tRNA(His) + AMP + diphosphate + H(+). The protein is Histidine--tRNA ligase of Anaplasma phagocytophilum (strain HZ).